We begin with the raw amino-acid sequence, 211 residues long: MKKITRIGIGGPVGSGKTAVIEVITPILIQRGIKPLIITNDIVTTEDAKQVKRTLKGILDEEKILGVETGACPHTAVREDPSMNIAAVEEMEARFPDSDVVLIESGGDNLTLTFSPALADFYIYVIDVAEGEKIPRKNGPGLVQADILVINKIDLAPYVGASLAVMEHDTQVVRGQRPYILTNCKTGEGVETLVNMIMRDFLFTHSLQATQ.

11 to 18 (GPVGSGKT) contributes to the GTP binding site.

It belongs to the SIMIBI class G3E GTPase family. UreG subfamily. Homodimer. UreD, UreF and UreG form a complex that acts as a GTP-hydrolysis-dependent molecular chaperone, activating the urease apoprotein by helping to assemble the nickel containing metallocenter of UreC. The UreE protein probably delivers the nickel.

Its subcellular location is the cytoplasm. Facilitates the functional incorporation of the urease nickel metallocenter. This process requires GTP hydrolysis, probably effectuated by UreG. This is Urease accessory protein UreG from Photorhabdus laumondii subsp. laumondii (strain DSM 15139 / CIP 105565 / TT01) (Photorhabdus luminescens subsp. laumondii).